The chain runs to 208 residues: Sec-independent protein translocase protein TatB (208 aa).

A helical membrane pass occupies residues 1-21; that stretch reads MFDIGVGELTLIAVVALVVLG. Positions 178 to 189 are enriched in low complexity; the sequence is APEPVAVAPVDA. The segment at 178–208 is disordered; that stretch reads APEPVAVAPVDAGTPAAWTPSAPAKLQEKQP.

It belongs to the TatB family. The Tat system comprises two distinct complexes: a TatABC complex, containing multiple copies of TatA, TatB and TatC subunits, and a separate TatA complex, containing only TatA subunits. Substrates initially bind to the TatABC complex, which probably triggers association of the separate TatA complex to form the active translocon.

It localises to the cell inner membrane. In terms of biological role, part of the twin-arginine translocation (Tat) system that transports large folded proteins containing a characteristic twin-arginine motif in their signal peptide across membranes. Together with TatC, TatB is part of a receptor directly interacting with Tat signal peptides. TatB may form an oligomeric binding site that transiently accommodates folded Tat precursor proteins before their translocation. This is Sec-independent protein translocase protein TatB from Xanthomonas euvesicatoria pv. vesicatoria (strain 85-10) (Xanthomonas campestris pv. vesicatoria).